We begin with the raw amino-acid sequence, 233 residues long: Large ribosomal subunit protein eL6z (233 aa).

The tract at residues 175 to 195 is disordered; it reads EFFEAEKEEKKEIPQEKKEDQ.

The protein belongs to the eukaryotic ribosomal protein eL6 family.

This Arabidopsis thaliana (Mouse-ear cress) protein is Large ribosomal subunit protein eL6z (RPL6A).